Here is a 44-residue protein sequence, read N- to C-terminus: Cytochrome b559 subunit beta (44 aa).

A helical membrane pass occupies residues 17–41 (VRWLAVHTLAVPSVFFVGAIAAMQF). Positions 18 and 23 each coordinate heme.

This sequence belongs to the PsbE/PsbF family. As to quaternary structure, heterodimer of an alpha subunit and a beta subunit. PSII is composed of 1 copy each of membrane proteins PsbA, PsbB, PsbC, PsbD, PsbE, PsbF, PsbH, PsbI, PsbJ, PsbK, PsbL, PsbM, PsbT, PsbX, PsbY, PsbZ, Psb30/Ycf12, peripheral proteins PsbO, CyanoQ (PsbQ), PsbU, PsbV and a large number of cofactors. It forms dimeric complexes. Heme b is required as a cofactor.

The protein localises to the cellular thylakoid membrane. In terms of biological role, this b-type cytochrome is tightly associated with the reaction center of photosystem II (PSII). PSII is a light-driven water:plastoquinone oxidoreductase that uses light energy to abstract electrons from H(2)O, generating O(2) and a proton gradient subsequently used for ATP formation. It consists of a core antenna complex that captures photons, and an electron transfer chain that converts photonic excitation into a charge separation. The polypeptide is Cytochrome b559 subunit beta (Synechocystis sp. (strain ATCC 27184 / PCC 6803 / Kazusa)).